Consider the following 391-residue polypeptide: Acridone synthase 2 (391 aa).

The active site involves Cys-164.

Belongs to the thiolase-like superfamily. Chalcone/stilbene synthases family. Homodimer.

It carries out the reaction N-methylanthraniloyl-CoA + 3 malonyl-CoA + 3 H(+) = 1,3-dihydroxy-N-methylacridone + 3 CO2 + 4 CoA + H2O. This Ruta graveolens (Common rue) protein is Acridone synthase 2 (ACS2).